A 967-amino-acid polypeptide reads, in one-letter code: Probable helicase DDB_G0274399 (967 aa).

A disordered region spans residues 161-192 (EMTDDEDTAPTSAATHVGAPTKSTTTTTTTTT). ATP is bound at residue 357–364 (GPPGTGKT). Disordered regions lie at residues 529 to 553 (SAIPSSSASTAAATSGSSRSTQDTS) and 892 to 967 (QKQK…RTRR). Residues 890–949 (NLQKQKDIEKRKKQHKRQKQKSKENDKKKQLKKRKELNNNDNNNNNKESSNKEVQEITNA) adopt a coiled-coil conformation. Residues 900–909 (RKKQHKRQKQ) are compositionally biased toward basic residues. A compositionally biased stretch (low complexity) spans 928 to 937 (NNDNNNNNKE).

It belongs to the DNA2/NAM7 helicase family.

The protein resides in the nucleus. This Dictyostelium discoideum (Social amoeba) protein is Probable helicase DDB_G0274399.